The primary structure comprises 406 residues: S-adenosylmethionine synthase (406 aa).

His16 is an ATP binding site. Asp18 lines the Mg(2+) pocket. Glu44 provides a ligand contact to K(+). L-methionine is bound by residues Glu57 and Gln109. A flexible loop region spans residues 109-119 (QSPQIAQGVDE). ATP is bound by residues 174-176 (DAK), 249-250 (RF), Asp258, 264-265 (RK), Ala281, and Lys285. Asp258 serves as a coordination point for L-methionine. Lys289 is a binding site for L-methionine.

Belongs to the AdoMet synthase family. Homotetramer; dimer of dimers. Requires Mg(2+) as cofactor. It depends on K(+) as a cofactor.

Its subcellular location is the cytoplasm. It carries out the reaction L-methionine + ATP + H2O = S-adenosyl-L-methionine + phosphate + diphosphate. Its pathway is amino-acid biosynthesis; S-adenosyl-L-methionine biosynthesis; S-adenosyl-L-methionine from L-methionine: step 1/1. In terms of biological role, catalyzes the formation of S-adenosylmethionine (AdoMet) from methionine and ATP. The overall synthetic reaction is composed of two sequential steps, AdoMet formation and the subsequent tripolyphosphate hydrolysis which occurs prior to release of AdoMet from the enzyme. The chain is S-adenosylmethionine synthase from Sphingopyxis alaskensis (strain DSM 13593 / LMG 18877 / RB2256) (Sphingomonas alaskensis).